Here is a 380-residue protein sequence, read N- to C-terminus: Tryptophan--tRNA ligase 2 (380 aa).

The 'HIGH' region motif lies at 74-82; it reads PSGPMHLGH. A 'KMSKS' region motif is present at residues 249–253; it reads KMSSS.

This sequence belongs to the class-I aminoacyl-tRNA synthetase family.

It is found in the cytoplasm. The catalysed reaction is tRNA(Trp) + L-tryptophan + ATP = L-tryptophyl-tRNA(Trp) + AMP + diphosphate + H(+). The chain is Tryptophan--tRNA ligase 2 from Halobacterium salinarum (strain ATCC 700922 / JCM 11081 / NRC-1) (Halobacterium halobium).